A 284-amino-acid polypeptide reads, in one-letter code: Pantothenate synthetase (284 aa).

Position 30–37 (30–37) interacts with ATP; sequence MGNLHEGH. The active-site Proton donor is the H37. Position 61 (Q61) interacts with (R)-pantoate. Q61 contacts beta-alanine. 149–152 provides a ligand contact to ATP; it reads GEKD. Position 155 (Q155) interacts with (R)-pantoate. ATP contacts are provided by residues V178 and 186 to 189; that span reads LSSR.

The protein belongs to the pantothenate synthetase family. As to quaternary structure, homodimer.

It localises to the cytoplasm. The catalysed reaction is (R)-pantoate + beta-alanine + ATP = (R)-pantothenate + AMP + diphosphate + H(+). The protein operates within cofactor biosynthesis; (R)-pantothenate biosynthesis; (R)-pantothenate from (R)-pantoate and beta-alanine: step 1/1. Catalyzes the condensation of pantoate with beta-alanine in an ATP-dependent reaction via a pantoyl-adenylate intermediate. The sequence is that of Pantothenate synthetase from Sodalis glossinidius (strain morsitans).